The primary structure comprises 89 residues: Small ribosomal subunit protein uS14 (89 aa).

It belongs to the universal ribosomal protein uS14 family. As to quaternary structure, part of the 30S ribosomal subunit. Contacts proteins S3 and S10.

Its function is as follows. Binds 16S rRNA, required for the assembly of 30S particles and may also be responsible for determining the conformation of the 16S rRNA at the A site. This chain is Small ribosomal subunit protein uS14, found in Acholeplasma laidlawii (strain PG-8A).